Consider the following 268-residue polypeptide: Ribosomal RNA small subunit methyltransferase A (268 aa).

Residues Asn16, Leu18, Gly43, Glu64, Asp89, and Asn110 each coordinate S-adenosyl-L-methionine.

It belongs to the class I-like SAM-binding methyltransferase superfamily. rRNA adenine N(6)-methyltransferase family. RsmA subfamily.

It is found in the cytoplasm. The enzyme catalyses adenosine(1518)/adenosine(1519) in 16S rRNA + 4 S-adenosyl-L-methionine = N(6)-dimethyladenosine(1518)/N(6)-dimethyladenosine(1519) in 16S rRNA + 4 S-adenosyl-L-homocysteine + 4 H(+). Specifically dimethylates two adjacent adenosines (A1518 and A1519) in the loop of a conserved hairpin near the 3'-end of 16S rRNA in the 30S particle. May play a critical role in biogenesis of 30S subunits. This Pseudomonas savastanoi pv. phaseolicola (strain 1448A / Race 6) (Pseudomonas syringae pv. phaseolicola (strain 1448A / Race 6)) protein is Ribosomal RNA small subunit methyltransferase A.